Reading from the N-terminus, the 646-residue chain is UvrABC system protein B (646 aa).

Positions Asn25–Pro412 constitute a Helicase ATP-binding domain. ATP is bound at residue Gly38–Thr45. Positions Tyr91–Ile114 match the Beta-hairpin motif. The region spanning Gln428–Glu594 is the Helicase C-terminal domain. A UVR domain is found at Glu611–Asn646.

This sequence belongs to the UvrB family. In terms of assembly, forms a heterotetramer with UvrA during the search for lesions. Interacts with UvrC in an incision complex.

It localises to the cytoplasm. Functionally, the UvrABC repair system catalyzes the recognition and processing of DNA lesions. A damage recognition complex composed of 2 UvrA and 2 UvrB subunits scans DNA for abnormalities. Upon binding of the UvrA(2)B(2) complex to a putative damaged site, the DNA wraps around one UvrB monomer. DNA wrap is dependent on ATP binding by UvrB and probably causes local melting of the DNA helix, facilitating insertion of UvrB beta-hairpin between the DNA strands. Then UvrB probes one DNA strand for the presence of a lesion. If a lesion is found the UvrA subunits dissociate and the UvrB-DNA preincision complex is formed. This complex is subsequently bound by UvrC and the second UvrB is released. If no lesion is found, the DNA wraps around the other UvrB subunit that will check the other stand for damage. This chain is UvrABC system protein B, found in Methanothermobacter thermautotrophicus (strain ATCC 29096 / DSM 1053 / JCM 10044 / NBRC 100330 / Delta H) (Methanobacterium thermoautotrophicum).